The chain runs to 337 residues: Phosphate acyltransferase (337 aa).

It belongs to the PlsX family. As to quaternary structure, homodimer. Probably interacts with PlsY.

Its subcellular location is the cytoplasm. The enzyme catalyses a fatty acyl-[ACP] + phosphate = an acyl phosphate + holo-[ACP]. It functions in the pathway lipid metabolism; phospholipid metabolism. In terms of biological role, catalyzes the reversible formation of acyl-phosphate (acyl-PO(4)) from acyl-[acyl-carrier-protein] (acyl-ACP). This enzyme utilizes acyl-ACP as fatty acyl donor, but not acyl-CoA. This Aromatoleum aromaticum (strain DSM 19018 / LMG 30748 / EbN1) (Azoarcus sp. (strain EbN1)) protein is Phosphate acyltransferase.